A 196-amino-acid polypeptide reads, in one-letter code: DnaA initiator-associating protein DiaA (196 aa).

Residues 34-196 (LVQSLLNGNK…DNTLFPHQDD (163 aa)) form the SIS domain.

This sequence belongs to the SIS family. DiaA subfamily. As to quaternary structure, homotetramer; dimer of dimers.

Required for the timely initiation of chromosomal replication via direct interactions with the DnaA initiator protein. This is DnaA initiator-associating protein DiaA from Klebsiella pneumoniae (strain 342).